A 64-amino-acid polypeptide reads, in one-letter code: uncharacterized protein (64 aa).

Widely expressed; not found in breast.

This is an uncharacterized protein from Homo sapiens (Human).